The following is a 752-amino-acid chain: GTPase-activating protein rrc-1 (752 aa).

An SH3 domain is found at 165–244; the sequence is PAIAAAVVTK…PRDCVMLIDD (80 aa). The Rho-GAP domain maps to 281–463; it reads LELTELFMRT…FCIENSDSLF (183 aa). Disordered stretches follow at residues 523–552 and 582–609; these read STGELCGSPPSEVKWRSRSTRSHSTDATFQ and RSMRPTSRPPPSPRTRRARFSNGGGANN.

Its function is as follows. Functions as a GTPase-activating protein (GAP) for ced-10/RAC-1 and CDC42. The protein is GTPase-activating protein rrc-1 of Caenorhabditis briggsae.